The sequence spans 183 residues: Ribulose bisphosphate carboxylase small subunit, chloroplastic 5 (183 aa).

The N-terminal 42 residues, 1–42 (MAAAMMNKSVLLNKQCGKPAAVPKVVMSKGGFARTSAVNKNR), are a transit peptide targeting the chloroplast.

Belongs to the RuBisCO small chain family. As to quaternary structure, heterohexadecamer of 8 large and 8 small subunits.

It is found in the plastid. Its subcellular location is the chloroplast. Its function is as follows. RuBisCO catalyzes two reactions: the carboxylation of D-ribulose 1,5-bisphosphate, the primary event in carbon dioxide fixation, as well as the oxidative fragmentation of the pentose substrate. Both reactions occur simultaneously and in competition at the same active site. Although the small subunit is not catalytic it is essential for maximal activity. This is Ribulose bisphosphate carboxylase small subunit, chloroplastic 5 from Acetabularia acetabulum (Mermaid's wine glass).